The chain runs to 103 residues: Large ribosomal subunit protein bL21 (103 aa).

It belongs to the bacterial ribosomal protein bL21 family. In terms of assembly, part of the 50S ribosomal subunit. Contacts protein L20.

Its function is as follows. This protein binds to 23S rRNA in the presence of protein L20. The protein is Large ribosomal subunit protein bL21 of Acidovorax ebreus (strain TPSY) (Diaphorobacter sp. (strain TPSY)).